The primary structure comprises 319 residues: Coproporphyrin III ferrochelatase 2 (319 aa).

Fe-coproporphyrin III is bound by residues Tyr13, Arg30, 46 to 47 (RY), Ser54, and Tyr125. Residues His181 and Glu262 each contribute to the Fe(2+) site.

The protein belongs to the ferrochelatase family.

The protein localises to the cytoplasm. The catalysed reaction is Fe-coproporphyrin III + 2 H(+) = coproporphyrin III + Fe(2+). It functions in the pathway porphyrin-containing compound metabolism; protoheme biosynthesis. Functionally, involved in coproporphyrin-dependent heme b biosynthesis. Catalyzes the insertion of ferrous iron into coproporphyrin III to form Fe-coproporphyrin III. The sequence is that of Coproporphyrin III ferrochelatase 2 from Bacillus cereus (strain ZK / E33L).